A 471-amino-acid chain; its full sequence is MTDLPDSTRWQLWIVAFGFFMQSLDTTIVNTALPSMAQSLGESPLHMHMVIVSYVLTVAVMLPASGWLADKVGVRNIFFTAIVLFTLGSLFCALSGTLNELLLARALQGVGGAMMVPVGRLTVMKIVPREQYMAAMTFVTLPGQVGPLLGPALGGLLVEYASWHWIFLINIPVGIIGAIATLLLMPNYTMQTWRFDLSGFLLLAVGMAVLTLALDGSKGTGLSPLAIAGLVAVGVVALVLYLLHARNNNRALFSLKLFRTRTFSLGLAGSFAGRIGSGMLPFMTPVFLQIGLGFSPFHAGLMMIPMVLGSMGMKRIVVQVVNRFGYRRVLVATTLGLSLVTLLFMTTALLGWYYVLPFVLFLQGMVNSTRFSSMNTLTLKDLPDNLASSGNSLLSMIMQLSMSIGVTIAGLLLGLFGSQHVSVDSGTTQTVFMYTWLSMALIIALPAFIFARVPNDTHQNVAISRRKRSAQ.

The Periplasmic portion of the chain corresponds to 1 to 11 (MTDLPDSTRWQ). A helical membrane pass occupies residues 12–32 (LWIVAFGFFMQSLDTTIVNTA). Residues 33–48 (LPSMAQSLGESPLHMH) are Cytoplasmic-facing. A helical transmembrane segment spans residues 49–69 (MVIVSYVLTVAVMLPASGWLA). Over 70-76 (DKVGVRN) the chain is Periplasmic. The helical transmembrane segment at 77-97 (IFFTAIVLFTLGSLFCALSGT) threads the bilayer. At 98-101 (LNEL) the chain is on the cytoplasmic side. Residues 102 to 124 (LLARALQGVGGAMMVPVGRLTVM) form a helical membrane-spanning segment. Residues 125-137 (KIVPREQYMAAMT) are Periplasmic-facing. A helical transmembrane segment spans residues 138 to 158 (FVTLPGQVGPLLGPALGGLLV). Over 159–164 (EYASWH) the chain is Cytoplasmic. A helical transmembrane segment spans residues 165–185 (WIFLINIPVGIIGAIATLLLM). Residues 186–196 (PNYTMQTWRFD) are Periplasmic-facing. Residues 197-217 (LSGFLLLAVGMAVLTLALDGS) traverse the membrane as a helical segment. The Cytoplasmic portion of the chain corresponds to 218–224 (KGTGLSP). A helical membrane pass occupies residues 225 to 245 (LAIAGLVAVGVVALVLYLLHA). Topologically, residues 246–262 (RNNNRALFSLKLFRTRT) are periplasmic. A helical membrane pass occupies residues 263 to 283 (FSLGLAGSFAGRIGSGMLPFM). The Cytoplasmic segment spans residues 284–285 (TP). The helical transmembrane segment at 286-306 (VFLQIGLGFSPFHAGLMMIPM) threads the bilayer. The Periplasmic portion of the chain corresponds to 307–341 (VLGSMGMKRIVVQVVNRFGYRRVLVATTLGLSLVT). A helical membrane pass occupies residues 342 to 362 (LLFMTTALLGWYYVLPFVLFL). At 363-395 (QGMVNSTRFSSMNTLTLKDLPDNLASSGNSLLS) the chain is on the cytoplasmic side. The helical transmembrane segment at 396 to 416 (MIMQLSMSIGVTIAGLLLGLF) threads the bilayer. Over 417 to 430 (GSQHVSVDSGTTQT) the chain is Periplasmic. A helical membrane pass occupies residues 431 to 451 (VFMYTWLSMALIIALPAFIFA). The Cytoplasmic segment spans residues 452-471 (RVPNDTHQNVAISRRKRSAQ).

Belongs to the major facilitator superfamily. TCR/Tet family.

Its subcellular location is the cell inner membrane. The chain is Putative multidrug resistance protein MdtD from Shigella boydii serotype 4 (strain Sb227).